Here is a 32-residue protein sequence, read N- to C-terminus: Tail virion protein G9P (32 aa).

Residues 8–24 (FASFVLGWCLRSGITYF) traverse the membrane as a helical segment.

The protein belongs to the inovirus G9P protein family.

It localises to the virion. It is found in the host membrane. May initiate with G7P the virion concomitant assembly-budding process, by interacting with the packaging signal of the viral genome. The assembly-budding takes place at the host inner membrane. In turn, G7P and G9P are present at the end of the filamentous virion that emerges first from the bacterial host. This chain is Tail virion protein G9P (IX), found in Escherichia coli (Bacteriophage f1).